The chain runs to 164 residues: Peptidyl-prolyl cis-trans isomerase A-like 4C (164 aa).

The PPIase cyclophilin-type domain occupies 7–163; it reads FFDITVDGKP…KKITIADCGQ (157 aa).

This sequence belongs to the cyclophilin-type PPIase family. PPIase A subfamily.

The protein resides in the cytoplasm. The catalysed reaction is [protein]-peptidylproline (omega=180) = [protein]-peptidylproline (omega=0). In terms of biological role, PPIases accelerate the folding of proteins. It catalyzes the cis-trans isomerization of proline imidic peptide bonds in oligopeptides. This is Peptidyl-prolyl cis-trans isomerase A-like 4C from Homo sapiens (Human).